Consider the following 166-residue polypeptide: Protein BioX (166 aa).

A run of 5 helical transmembrane segments spans residues 12–32, 33–53, 55–75, 87–107, and 117–137; these read ISLL…TGIP, GSEF…FGFK, YFLA…HSIL, VGLI…AGPI, and AFTL…GMVI.

The protein resides in the cell membrane. Does not seem to be a permease of pimelate. Its role in biotin synthesis is not clear. This chain is Protein BioX (bioX), found in Lysinibacillus sphaericus (Bacillus sphaericus).